Here is a 202-residue protein sequence, read N- to C-terminus: S-modulin (202 aa).

The N-myristoyl glycine moiety is linked to residue glycine 2. EF-hand domains lie at 25–60 (QEEL…FPDA), 61–96 (DPKA…TSSG), 97–132 (KANQ…IFKM), and 147–182 (TPEK…NKEI). The Ca(2+) site is built by aspartate 74, asparagine 76, aspartate 78, threonine 80, glutamate 85, aspartate 110, aspartate 112, asparagine 114, threonine 116, and glutamate 121.

The protein belongs to the recoverin family. The N-terminus is blocked.

In terms of biological role, calcium-dependent regulator of light sensitivity of cGMP phosphodiesterase in rod outer segments. Controls rhodopsin phosphorylation in a Ca(2+)-dependent manner. The polypeptide is S-modulin (Aquarana catesbeiana (American bullfrog)).